The following is a 565-amino-acid chain: NAD-dependent malic enzyme (565 aa).

Tyrosine 104 (proton donor) is an active-site residue. An NAD(+)-binding site is contributed by arginine 157. Residue lysine 175 is the Proton acceptor of the active site. Positions 246, 247, and 270 each coordinate a divalent metal cation. The NAD(+) site is built by aspartate 270 and asparagine 418.

It belongs to the malic enzymes family. In terms of assembly, homotetramer. It depends on Mg(2+) as a cofactor. Requires Mn(2+) as cofactor.

It catalyses the reaction (S)-malate + NAD(+) = pyruvate + CO2 + NADH. The catalysed reaction is oxaloacetate + H(+) = pyruvate + CO2. The protein is NAD-dependent malic enzyme of Klebsiella pneumoniae (strain 342).